A 202-amino-acid chain; its full sequence is Glycerol-3-phosphate acyltransferase (202 aa).

The next 4 helical transmembrane spans lie at 2–22, 80–100, 119–139, and 158–178; these read ANLL…AVVV, LNET…LFPV, AIDP…AFFF, and VLMN…VLLI.

It belongs to the PlsY family. In terms of assembly, probably interacts with PlsX.

It is found in the cell inner membrane. It carries out the reaction an acyl phosphate + sn-glycerol 3-phosphate = a 1-acyl-sn-glycero-3-phosphate + phosphate. It functions in the pathway lipid metabolism; phospholipid metabolism. Catalyzes the transfer of an acyl group from acyl-phosphate (acyl-PO(4)) to glycerol-3-phosphate (G3P) to form lysophosphatidic acid (LPA). This enzyme utilizes acyl-phosphate as fatty acyl donor, but not acyl-CoA or acyl-ACP. This is Glycerol-3-phosphate acyltransferase from Cupriavidus necator (strain ATCC 17699 / DSM 428 / KCTC 22496 / NCIMB 10442 / H16 / Stanier 337) (Ralstonia eutropha).